Consider the following 154-residue polypeptide: Large ribosomal subunit protein uL13 (154 aa).

The protein belongs to the universal ribosomal protein uL13 family. As to quaternary structure, part of the 50S ribosomal subunit.

In terms of biological role, this protein is one of the early assembly proteins of the 50S ribosomal subunit, although it is not seen to bind rRNA by itself. It is important during the early stages of 50S assembly. This is Large ribosomal subunit protein uL13 from Allorhizobium ampelinum (strain ATCC BAA-846 / DSM 112012 / S4) (Agrobacterium vitis (strain S4)).